A 355-amino-acid polypeptide reads, in one-letter code: uncharacterized protein (355 aa).

This sequence belongs to the ycf89 family.

The protein resides in the plastid. The protein localises to the chloroplast. This is an uncharacterized protein from Trieres chinensis (Marine centric diatom).